We begin with the raw amino-acid sequence, 549 residues long: SH3 domain-containing protein 21 (549 aa).

The interval 1-56 (MVQSELQLQPRAGRRADASNWGDFGSDKGGLGNTDIPPITPNSQRPPKLSNLTYDS) is disordered. The segment covering 41 to 54 (PNSQRPPKLSNLTY) has biased composition (polar residues). One can recognise an SH3 domain in the interval 65–126 (SCPETCRVLF…PDNFVIPPPP (62 aa)). 2 disordered regions span residues 142-303 (PIKE…KPAK) and 332-479 (FKKE…KSKN). A compositionally biased stretch (low complexity) spans 211–220 (QASQQHSASS). Basic and acidic residues-rich tracts occupy residues 267-280 (PVPKKAPDSDKIPA) and 332-342 (FKKEPSRDNDQ). Polar residues-rich tracts occupy residues 343-365 (CQHLPQGGSTQRPESPAPSNNIQ) and 439-456 (VLPQESAPTPQVPHTIQQ). The stretch at 482–510 (MDVLESLKEEVGLLRSRLELLELKLEQKM) forms a coiled coil. Residues 528 to 549 (QMMQRNRKSFKHAETQTETQTE) are disordered.

The sequence is that of SH3 domain-containing protein 21 (Sh3d21) from Mus musculus (Mouse).